The chain runs to 118 residues: Large ribosomal subunit protein uL18 (118 aa).

It belongs to the universal ribosomal protein uL18 family. As to quaternary structure, part of the 50S ribosomal subunit; part of the 5S rRNA/L5/L18/L25 subcomplex. Contacts the 5S and 23S rRNAs.

In terms of biological role, this is one of the proteins that bind and probably mediate the attachment of the 5S RNA into the large ribosomal subunit, where it forms part of the central protuberance. This is Large ribosomal subunit protein uL18 from Lactobacillus acidophilus (strain ATCC 700396 / NCK56 / N2 / NCFM).